A 260-amino-acid polypeptide reads, in one-letter code: (R)-2-hydroxyglutaryl-CoA dehydratase activating ATPase (260 aa).

Residue 12–16 (STASK) coordinates ATP. [4Fe-4S] cluster-binding residues include C127 and C166. Q220 and Q243 together coordinate ATP.

This sequence belongs to the HgdC family. In terms of assembly, homodimer. [4Fe-4S] cluster is required as a cofactor. Requires Mg(2+) as cofactor.

It catalyses the reaction ATP + H2O = ADP + phosphate + H(+). The protein operates within amino-acid degradation; L-glutamate degradation via hydroxyglutarate pathway; crotonoyl-CoA from L-glutamate: step 4/5. With respect to regulation, inactivated by exposure to air within less than 15 minutes. In terms of biological role, involved in the fermentation of L-glutamate via the hydroxyglutarate pathway. HgdC (CompA) has a very low ATPase activity, whose the role is to activate dehydratase HgdA-HgdB complex and then maintain an appropriate redox state via an ATP-dependent electron transfer. The dehydratase requires only catalytic amounts of ATP and substoichiometric amounts of HgdC (CompA) to be functional. In Acidaminococcus fermentans (strain ATCC 25085 / DSM 20731 / CCUG 9996 / CIP 106432 / VR4), this protein is (R)-2-hydroxyglutaryl-CoA dehydratase activating ATPase.